Consider the following 540-residue polypeptide: Phosphoenolpyruvate carboxykinase (ATP) (540 aa).

Arginine 65 provides a ligand contact to substrate. At lysine 87 the chain carries N6-acetyllysine. Residues tyrosine 207 and lysine 213 each contribute to the substrate site. ATP is bound by residues lysine 213, histidine 232, and 248 to 256 (GLSGTGKTT). The Mn(2+) site is built by lysine 213 and histidine 232. Residue aspartate 269 coordinates Mn(2+). Residues glutamate 297, arginine 333, 449-450 (RI), and threonine 455 each bind ATP. Substrate is bound at residue arginine 333. Lysine 523 is subject to N6-acetyllysine.

This sequence belongs to the phosphoenolpyruvate carboxykinase (ATP) family. As to quaternary structure, monomer. Mn(2+) is required as a cofactor.

The protein resides in the cytoplasm. It carries out the reaction oxaloacetate + ATP = phosphoenolpyruvate + ADP + CO2. It participates in carbohydrate biosynthesis; gluconeogenesis. Involved in the gluconeogenesis. Catalyzes the conversion of oxaloacetate (OAA) to phosphoenolpyruvate (PEP) through direct phosphoryl transfer between the nucleoside triphosphate and OAA. The protein is Phosphoenolpyruvate carboxykinase (ATP) of Escherichia coli O127:H6 (strain E2348/69 / EPEC).